Reading from the N-terminus, the 240-residue chain is Peptidyl-tRNA hydrolase (240 aa).

Position 14 (Tyr-14) interacts with tRNA. The active-site Proton acceptor is the His-19. Tyr-64, Asn-66, and Asn-112 together coordinate tRNA. Residues 190–204 show a composition bias toward basic and acidic residues; sequence KADEEKPRKDSEKKP. The disordered stretch occupies residues 190 to 240; that stretch reads KADEEKPRKDSEKKPAGQSHIRQARNNNQPKLPATGPMADMLKKMFGNKGE. The segment covering 209-219 has biased composition (polar residues); it reads HIRQARNNNQP.

Belongs to the PTH family. As to quaternary structure, monomer.

The protein localises to the cytoplasm. It carries out the reaction an N-acyl-L-alpha-aminoacyl-tRNA + H2O = an N-acyl-L-amino acid + a tRNA + H(+). Functionally, hydrolyzes ribosome-free peptidyl-tRNAs (with 1 or more amino acids incorporated), which drop off the ribosome during protein synthesis, or as a result of ribosome stalling. In terms of biological role, catalyzes the release of premature peptidyl moieties from peptidyl-tRNA molecules trapped in stalled 50S ribosomal subunits, and thus maintains levels of free tRNAs and 50S ribosomes. The protein is Peptidyl-tRNA hydrolase of Rhizobium etli (strain ATCC 51251 / DSM 11541 / JCM 21823 / NBRC 15573 / CFN 42).